The primary structure comprises 297 residues: Acetyl-coenzyme A carboxylase carboxyl transferase subunit beta (297 aa).

The CoA carboxyltransferase N-terminal domain occupies 27 to 296 (LWHKCPACEA…PEQAREAAAV (270 aa)). Positions 31, 34, 50, and 53 each coordinate Zn(2+). Residues 31–53 (CPACEAVLYRPELEKTLDVCPKC) form a C4-type zinc finger.

This sequence belongs to the AccD/PCCB family. Acetyl-CoA carboxylase is a heterohexamer composed of biotin carboxyl carrier protein (AccB), biotin carboxylase (AccC) and two subunits each of ACCase subunit alpha (AccA) and ACCase subunit beta (AccD). Zn(2+) is required as a cofactor.

It localises to the cytoplasm. It catalyses the reaction N(6)-carboxybiotinyl-L-lysyl-[protein] + acetyl-CoA = N(6)-biotinyl-L-lysyl-[protein] + malonyl-CoA. The protein operates within lipid metabolism; malonyl-CoA biosynthesis; malonyl-CoA from acetyl-CoA: step 1/1. Its function is as follows. Component of the acetyl coenzyme A carboxylase (ACC) complex. Biotin carboxylase (BC) catalyzes the carboxylation of biotin on its carrier protein (BCCP) and then the CO(2) group is transferred by the transcarboxylase to acetyl-CoA to form malonyl-CoA. This is Acetyl-coenzyme A carboxylase carboxyl transferase subunit beta from Pseudomonas putida (strain W619).